Reading from the N-terminus, the 95-residue chain is uncharacterized protein (95 aa).

This is an uncharacterized protein from Haemophilus influenzae (strain ATCC 51907 / DSM 11121 / KW20 / Rd).